The sequence spans 95 residues: Phosphoribosyl-ATP pyrophosphatase (95 aa).

Belongs to the PRA-PH family.

The protein localises to the cytoplasm. It carries out the reaction 1-(5-phospho-beta-D-ribosyl)-ATP + H2O = 1-(5-phospho-beta-D-ribosyl)-5'-AMP + diphosphate + H(+). It functions in the pathway amino-acid biosynthesis; L-histidine biosynthesis; L-histidine from 5-phospho-alpha-D-ribose 1-diphosphate: step 2/9. The polypeptide is Phosphoribosyl-ATP pyrophosphatase (Halobacterium salinarum (strain ATCC 29341 / DSM 671 / R1)).